The sequence spans 666 residues: Asperfuranone cluster transcription factor afoA (666 aa).

Residues 16–43 (CEECRRRKARCDRVRPKCGFCTENELQC) constitute a DNA-binding region (zn(2)-C6 fungal-type). 2 disordered regions span residues 184-206 (LSFDLLNETPPPPSTTTTTSTTR) and 347-373 (AGSDRQLSPPSSSPPSSLTLSPSGENA). Low complexity predominate over residues 353-369 (LSPPSSSPPSSLTLSPS).

Its subcellular location is the nucleus. Functionally, transcription factor that regulates the expression of the gene cluster that mediates the biosynthesis of asperfuranone, a probable antitumor agent. The chain is Asperfuranone cluster transcription factor afoA from Emericella nidulans (strain FGSC A4 / ATCC 38163 / CBS 112.46 / NRRL 194 / M139) (Aspergillus nidulans).